Consider the following 295-residue polypeptide: 4-hydroxy-tetrahydrodipicolinate synthase (295 aa).

T48 contributes to the pyruvate binding site. Residue Y136 is the Proton donor/acceptor of the active site. The active-site Schiff-base intermediate with substrate is K164. I206 serves as a coordination point for pyruvate.

It belongs to the DapA family. As to quaternary structure, homotetramer; dimer of dimers.

It localises to the cytoplasm. It carries out the reaction L-aspartate 4-semialdehyde + pyruvate = (2S,4S)-4-hydroxy-2,3,4,5-tetrahydrodipicolinate + H2O + H(+). The protein operates within amino-acid biosynthesis; L-lysine biosynthesis via DAP pathway; (S)-tetrahydrodipicolinate from L-aspartate: step 3/4. In terms of biological role, catalyzes the condensation of (S)-aspartate-beta-semialdehyde [(S)-ASA] and pyruvate to 4-hydroxy-tetrahydrodipicolinate (HTPA). In Actinobacillus pleuropneumoniae serotype 7 (strain AP76), this protein is 4-hydroxy-tetrahydrodipicolinate synthase.